The chain runs to 137 residues: Large-conductance mechanosensitive channel (137 aa).

2 helical membrane-spanning segments follow: residues 10-30 (FAMR…AAFG) and 76-96 (GVFL…FMAI).

It belongs to the MscL family. In terms of assembly, homopentamer.

The protein resides in the cell inner membrane. In terms of biological role, channel that opens in response to stretch forces in the membrane lipid bilayer. May participate in the regulation of osmotic pressure changes within the cell. This is Large-conductance mechanosensitive channel from Erwinia tasmaniensis (strain DSM 17950 / CFBP 7177 / CIP 109463 / NCPPB 4357 / Et1/99).